We begin with the raw amino-acid sequence, 325 residues long: uncharacterized protein (325 aa).

Residues 67–87 (WIPFFLLFSSVVVLGGLWWLG) form a helical membrane-spanning segment.

It is found in the membrane. This is an uncharacterized protein from Synechocystis sp. (strain ATCC 27184 / PCC 6803 / Kazusa).